A 336-amino-acid polypeptide reads, in one-letter code: Alpha-N-acetylgalactosaminide alpha-2,6-sialyltransferase 5 (336 aa).

Residues 1-8 (MKTLMRHG) are Cytoplasmic-facing. Residues 9–29 (LAVCLVLTTMCTSLLLVYSSL) form a helical; Signal-anchor for type II membrane protein membrane-spanning segment. Over 30–336 (GSQKERPPQQ…VNHAEGKPVF (307 aa)) the chain is Lumenal. The segment at 34–76 (ERPPQQQQQQQQQQQQAATATGSTQLVESSPQPRRTAPAGPRQ) is disordered. Positions 38–49 (QQQQQQQQQQQQ) are enriched in low complexity. Polar residues predominate over residues 50–66 (AATATGSTQLVESSPQP). A disulfide bridge connects residues C96 and C245. N137 and N161 each carry an N-linked (GlcNAc...) asparagine glycan.

This sequence belongs to the glycosyltransferase 29 family. In terms of tissue distribution, high expression in forebrain and to a lesser extent in cerebellum. No expression in salivary gland, intestine, liver, kidney, heart, lung, thymus and spleen.

It is found in the golgi apparatus membrane. It catalyses the reaction a ganglioside GM1b (d18:1(4E)) + CMP-N-acetyl-beta-neuraminate = a ganglioside GD1alpha (d18:1(4E)) + CMP + H(+). The enzyme catalyses N-acetyl-alpha-neuraminosyl-(2-&gt;3)-beta-D-galactosyl-(1-&gt;3)-N-acetyl-beta-D-glucosaminyl-(1-&gt;3)-beta-D-galactosyl-(1-&gt;4)-beta-D-glucosyl-(1&lt;-&gt;1')-N-acyl-sphing-4-enine + CMP-N-acetyl-beta-neuraminate = N-acetyl-alpha-neuraminosyl-(2-&gt;3)-beta-D-galactosyl-(1-&gt;3)-[N-acetyl-alpha-neuraminosyl-(2-&gt;6)]-N-acetyl-beta-D-glucosaminyl-(1-&gt;3)-beta-D-galactosyl-(1-&gt;4)-beta-D-glucosyl-(1&lt;-&gt;1')-N-acyl-sphing-4-enine + CMP + H(+). It participates in glycolipid biosynthesis. Predominantly catalyzes the biosynthesis of ganglioside GD1alpha from GM1b in the brain, by transferring the sialyl group (N-acetyl-alpha-neuraminyl or NeuAc) from CMP-NeuAc to the GalNAc residue on the NeuAc-alpha-2,3-Gal-beta-1,3-GalNAc sequence of GM1b. GD1alpha is a critical molecule in the communication and interaction between neuronal cells and their supportive cells, particularly in brain tissues, and functions as an adhesion molecule in the process of metastasis. Also shows activity towards sialyl Lc4Cer (N-acetyl-alpha-neuraminosyl-(2-&gt;3)-beta-D-galactosyl-(1-&gt;3)-N-acetyl-beta-D-glucosaminyl-(1-&gt;3)-beta-D-galactosyl-(1-&gt;4)-beta-D-glucosyl-(1&lt;-&gt;1')-N-acyl-sphing-4-enine) generating disialyl Lc4Cer, which can lead to the synthesis of disialyl Lewis a (Le(a)), suggested to be a cancer-associated antigen. This chain is Alpha-N-acetylgalactosaminide alpha-2,6-sialyltransferase 5 (St6galnac5), found in Mus musculus (Mouse).